We begin with the raw amino-acid sequence, 550 residues long: Medium-chain acyl-CoA ligase Mig (550 aa).

An N-terminal signal peptide occupies residues 1 to 19 (MSDTTTAFTVPAVAKAVAA).

It belongs to the ATP-dependent AMP-binding enzyme family.

The protein resides in the secreted. It localises to the cell wall. It catalyses the reaction a medium-chain fatty acid + ATP + CoA = a medium-chain fatty acyl-CoA + AMP + diphosphate. The catalysed reaction is hexanoate + ATP + CoA = hexanoyl-CoA + AMP + diphosphate. The enzyme catalyses heptanoate + ATP + CoA = heptanoyl-CoA + AMP + diphosphate. It carries out the reaction octanoate + ATP + CoA = octanoyl-CoA + AMP + diphosphate. It catalyses the reaction decanoate + ATP + CoA = decanoyl-CoA + AMP + diphosphate. The catalysed reaction is dodecanoate + ATP + CoA = dodecanoyl-CoA + AMP + diphosphate. The enzyme catalyses tetradecanoate + ATP + CoA = tetradecanoyl-CoA + AMP + diphosphate. It carries out the reaction (9Z)-octadecenoate + ATP + CoA = (9Z)-octadecenoyl-CoA + AMP + diphosphate. It catalyses the reaction (9Z,12Z,15Z)-octadecatrienoate + ATP + CoA = (9Z,12Z,15Z)-octadecatrienoyl-CoA + AMP + diphosphate. The catalysed reaction is (5Z,8Z,11Z,14Z)-eicosatetraenoate + ATP + CoA = (5Z,8Z,11Z,14Z)-eicosatetraenoyl-CoA + AMP + diphosphate. It functions in the pathway lipid metabolism; fatty acid metabolism. With respect to regulation, inhibited by 2-hydroxydodecanoic acid, a typical inhibitor of medium-chain acyl-CoA synthetases. Functionally, catalyzes the activation of medium-chain fatty acids as acyl-coenzyme A (acyl-CoA). Shows maximal activity with saturated fatty acids of medium-chain length between C6 and C12. Has lower activity with tridecanoic acid (C13), tetradecanoic acid (C14) and with unsaturated fatty acids like oleic acid (C18:1), linolenic acid (C18:3) and arachidonic acid (C20:4). Shows weak activity with some aromatic carbon acids. Involved in the metabolism of fatty acid during mycobacterial survival in macrophages. The protein is Medium-chain acyl-CoA ligase Mig of Mycobacterium avium.